The primary structure comprises 205 residues: Dephospho-CoA kinase (205 aa).

One can recognise a DPCK domain in the interval 4–203; sequence KIGITGGIGS…QKIHYLCSAK (200 aa). 12-17 lines the ATP pocket; that stretch reads GSGKSV.

Belongs to the CoaE family.

Its subcellular location is the cytoplasm. It catalyses the reaction 3'-dephospho-CoA + ATP = ADP + CoA + H(+). It functions in the pathway cofactor biosynthesis; coenzyme A biosynthesis; CoA from (R)-pantothenate: step 5/5. Functionally, catalyzes the phosphorylation of the 3'-hydroxyl group of dephosphocoenzyme A to form coenzyme A. This chain is Dephospho-CoA kinase, found in Bacteroides fragilis (strain YCH46).